The sequence spans 69 residues: Cap-specific mRNA (nucleoside-2'-O-)-methyltransferase (69 aa).

Residue Tyr-22 participates in mRNA binding. Residues Gln-39, Tyr-66, and Gly-68 each contribute to the S-adenosyl-L-methionine site.

It belongs to the class I-like SAM-binding methyltransferase superfamily. Poxvirus/kinetoplastid 2'-O-MTase family. As to quaternary structure, interacts with poly(A) polymerase catalytic subunit OPG063. Interacts with OPG109 and OPG123; these interactions might help linking transcription to capping and polyadenylation.

It localises to the virion. The enzyme catalyses a 5'-end (N(7)-methyl 5'-triphosphoguanosine)-ribonucleoside in mRNA + S-adenosyl-L-methionine = a 5'-end (N(7)-methyl 5'-triphosphoguanosine)-(2'-O-methyl-ribonucleoside) in mRNA + S-adenosyl-L-homocysteine + H(+). In terms of biological role, displays methyltransferase, positive regulation of the poly(A) polymerase and transcription elongation activities. Involved in the modification of both mRNA ends and in intermediate and late gene positive transcription elongation. At the mRNAs 5' end, methylates the ribose 2' OH group of the first transcribed nucleotide, thereby producing a 2'-O-methylpurine cap. At the 3' end, functions as a processivity factor which stimulates the activity of the viral poly(A) polymerase OPG063 that creates mRNA's poly(A) tail. In the presence of OPG102, OPG063 does not dissociate from the RNA allowing tail elongation to around 250 adenylates. The polypeptide is Cap-specific mRNA (nucleoside-2'-O-)-methyltransferase (OPG102) (Sus scrofa (Pig)).